Consider the following 505-residue polypeptide: Cholesteryl ester transfer protein (505 aa).

An N-terminal signal peptide occupies residues 1-24 (MLWAGGMRLGMARILLMLVHAAAA). N-linked (GlcNAc...) asparagine glycans are attached at residues Asn-68 and Asn-114. Cys-169 and Cys-210 are joined by a disulfide. N-linked (GlcNAc...) asparagine glycans are attached at residues Asn-266, Asn-344, and Asn-422.

Belongs to the BPI/LBP/Plunc superfamily. BPI/LBP family. In terms of tissue distribution, highly expressed in liver brain, heart, and spleen. Secreted in plasma.

It localises to the secreted. It carries out the reaction cholesteryl (9Z-octadecenoate)(in) = cholesteryl (9Z-octadecenoate)(out). The enzyme catalyses 1,2,3-tri-(9Z-octadecenoyl)-glycerol(in) = 1,2,3-tri-(9Z-octadecenoyl)-glycerol(out). It catalyses the reaction cholesteryl (9Z,12Z)-octadecadienoate(in) = cholesteryl (9Z,12Z)-octadecadienoate(out). Functionally, involved in the transfer of neutral lipids, including cholesteryl ester and triglyceride, among lipoprotein particles. Allows the net movement of cholesteryl ester from high density lipoproteins/HDL to triglyceride-rich very low density lipoproteins/VLDL, and the equimolar transport of triglyceride from VLDL to HDL. Regulates the reverse cholesterol transport, by which excess cholesterol is removed from peripheral tissues and returned to the liver for elimination. In Gallus gallus (Chicken), this protein is Cholesteryl ester transfer protein.